A 339-amino-acid polypeptide reads, in one-letter code: Terpene synthase 9 (339 aa).

The DDxx(x)D/E motif signature appears at 79–84 (DDFLES). Positions 219-227 (NDCASYAKE) match the NDxxSxxxD/E motif motif.

Belongs to the terpene synthase family.

The catalysed reaction is (2E,6E)-farnesyl diphosphate = (-)-beta-barbatene + diphosphate. It carries out the reaction (2E,6E)-farnesyl diphosphate = (E)-beta-farnesene + diphosphate. It catalyses the reaction (2E)-geranyl diphosphate = (Z)-beta-ocimene + diphosphate. The enzyme catalyses (2E)-geranyl diphosphate + H2O = linalool + diphosphate. The catalysed reaction is (2E)-geranyl diphosphate = beta-myrcene + diphosphate. Functionally, terpene synthase that converts its substrate farnesyl diphosphate (FPP) into the sesquiterpene beta-barbatene as a major product as well as (E)-beta-farnesene as a minor product. Is also able to convert geranyl diphosphate (GPP) into a mixture of monoterpenes including (Z)-beta-ocimene, linalool, beta-myrcene, limonene and alpha-terpineol. The polypeptide is Terpene synthase 9 (Dictyostelium discoideum (Social amoeba)).